The following is a 496-amino-acid chain: GTPase Der (496 aa).

2 consecutive EngA-type G domains span residues 3 to 166 and 209 to 382; these read PVIA…VGKF and VKLA…TCAT. GTP is bound by residues 9–16, 56–60, 118–121, 215–222, 262–266, and 327–330; these read GRPNVGKS, DTGGI, NKTD, DTAGV, and NKWD. The KH-like domain maps to 383-467; that stretch reads RRVGTSMLTR…PIRIQFKEGE (85 aa).

This sequence belongs to the TRAFAC class TrmE-Era-EngA-EngB-Septin-like GTPase superfamily. EngA (Der) GTPase family. Associates with the 50S ribosomal subunit.

Its function is as follows. GTPase that plays an essential role in the late steps of ribosome biogenesis. This is GTPase Der from Proteus mirabilis (strain HI4320).